A 155-amino-acid polypeptide reads, in one-letter code: MKLQLVAVGTKMPDWVQTGFTEYLRRFPKDMPFELVEIPAGKRGKNADIKRILDKEGELMLAAAGKNRIVTLDIPGKPWDTPQLAQELERWKLDGRDVSLLIGGPEGLSSACKAAAEQSWSLSALTLPHPLVRVLVAESLYRAWSITTNHPYHRE.

S-adenosyl-L-methionine-binding positions include Leu-72, Gly-103, and 122 to 127 (LSALTL).

The protein belongs to the RNA methyltransferase RlmH family. Homodimer.

It is found in the cytoplasm. It carries out the reaction pseudouridine(1915) in 23S rRNA + S-adenosyl-L-methionine = N(3)-methylpseudouridine(1915) in 23S rRNA + S-adenosyl-L-homocysteine + H(+). Its function is as follows. Specifically methylates the pseudouridine at position 1915 (m3Psi1915) in 23S rRNA. In Enterobacter sp. (strain 638), this protein is Ribosomal RNA large subunit methyltransferase H.